The sequence spans 92 residues: LYR motif-containing protein 4A (92 aa).

This sequence belongs to the complex I LYR family.

The protein is LYR motif-containing protein 4A (lyrm4a) of Salmo salar (Atlantic salmon).